A 355-amino-acid polypeptide reads, in one-letter code: MQLSSTQPSSKTQEPSTAQDVITMQHILEKLYGANSISRQESQALFGAIIRGELEASQLAAALISMKVRGEHPDEIAGAATALLADAQPFPRPDYLFADIVGTGGDGTNSINISTASAFVAASCGLKIAKHGNRSVSSRSGSSDLLSAFGIKLDMSAQDSRQALDDLGVCFLFAPQYHLGFRHAMPVRQQLKTRTVFNVLGPLVNPARPPLALIGVYSPELVRPIAETLKVLGYQRAAVVHGGGMDEVAIHAPTQVAELNHGEIETYELTHRDFGLDTHPLSALQGGTPEENRDILASLLQGKGERAHAAAVAANVALLLRLFGQEDLRQNAQQALEVIHSGQAYQRVIALSARG.

Residues glycine 102, 105 to 106 (GD), serine 110, 112 to 115 (NIST), 130 to 138 (KHGNRSVSS), and serine 142 contribute to the 5-phospho-alpha-D-ribose 1-diphosphate site. Glycine 102 is a binding site for anthranilate. Residue serine 114 coordinates Mg(2+). Asparagine 133 lines the anthranilate pocket. Arginine 188 serves as a coordination point for anthranilate. Mg(2+) is bound by residues aspartate 246 and glutamate 247.

Belongs to the anthranilate phosphoribosyltransferase family. Homodimer. Mg(2+) is required as a cofactor.

The enzyme catalyses N-(5-phospho-beta-D-ribosyl)anthranilate + diphosphate = 5-phospho-alpha-D-ribose 1-diphosphate + anthranilate. It functions in the pathway amino-acid biosynthesis; L-tryptophan biosynthesis; L-tryptophan from chorismate: step 2/5. In terms of biological role, catalyzes the transfer of the phosphoribosyl group of 5-phosphorylribose-1-pyrophosphate (PRPP) to anthranilate to yield N-(5'-phosphoribosyl)-anthranilate (PRA). In Pectobacterium atrosepticum (strain SCRI 1043 / ATCC BAA-672) (Erwinia carotovora subsp. atroseptica), this protein is Anthranilate phosphoribosyltransferase.